The sequence spans 114 residues: Eukaryotic translation initiation factor 6 (114 aa).

Belongs to the eIF-6 family. Monomer. Associates with the 60S ribosomal subunit.

It is found in the cytoplasm. It localises to the nucleus. The protein resides in the nucleolus. Its function is as follows. Binds to the 60S ribosomal subunit and prevents its association with the 40S ribosomal subunit to form the 80S initiation complex in the cytoplasm. May also be involved in ribosome biogenesis. This Trypanosoma cruzi protein is Eukaryotic translation initiation factor 6.